A 275-amino-acid chain; its full sequence is Small ribosomal subunit protein uS3 (275 aa).

The KH type-2 domain maps to 38 to 106; it reads IRRMMTSGME…QVQLNILEVK (69 aa). Over residues 216–228 the composition is skewed to low complexity; sequence NAAARAGNRPARG. Residues 216-275 form a disordered region; that stretch reads NAAARAGNRPARGGADRPARGGRGGERGGRGRKPQQAPAAEAPKAEAPAAAPAESTGTEA. Positions 229-244 are enriched in basic and acidic residues; that stretch reads GADRPARGGRGGERGG. Residues 249-268 show a composition bias toward low complexity; it reads PQQAPAAEAPKAEAPAAAPA.

It belongs to the universal ribosomal protein uS3 family. As to quaternary structure, part of the 30S ribosomal subunit. Forms a tight complex with proteins S10 and S14.

In terms of biological role, binds the lower part of the 30S subunit head. Binds mRNA in the 70S ribosome, positioning it for translation. This Streptomyces avermitilis (strain ATCC 31267 / DSM 46492 / JCM 5070 / NBRC 14893 / NCIMB 12804 / NRRL 8165 / MA-4680) protein is Small ribosomal subunit protein uS3.